A 725-amino-acid polypeptide reads, in one-letter code: Peroxisomal fatty acid beta-oxidation multifunctional protein MFP2 (725 aa).

The active-site Nucleophile is Glu-119. The Proton acceptor role is filled by Glu-139. The short motif at 723–725 is the Microbody targeting signal element; sequence SRL.

This sequence in the N-terminal section; belongs to the enoyl-CoA hydratase/isomerase family. The protein in the central section; belongs to the 3-hydroxyacyl-CoA dehydrogenase family. In terms of tissue distribution, highly expressed in senescing leaves and at lower levels in flowers and siliques.

The protein resides in the glyoxysome. The protein localises to the peroxisome. The catalysed reaction is a (3S)-3-hydroxyacyl-CoA = a (2E)-enoyl-CoA + H2O. It catalyses the reaction a 4-saturated-(3S)-3-hydroxyacyl-CoA = a (3E)-enoyl-CoA + H2O. The enzyme catalyses (3S)-3-hydroxybutanoyl-CoA = (2E)-butenoyl-CoA + H2O. It carries out the reaction (3S)-hydroxyoctanoyl-CoA = (2E)-octenoyl-CoA + H2O. The catalysed reaction is (3S)-3-hydroxydodecanoyl-CoA = (2E)-dodecenoyl-CoA + H2O. It catalyses the reaction (3S)-hydroxytetradecanoyl-CoA = (2E)-tetradecenoyl-CoA + H2O. The enzyme catalyses (3S)-hydroxyhexanoyl-CoA = (2E)-hexenoyl-CoA + H2O. It carries out the reaction a (3Z)-enoyl-CoA = a 4-saturated (2E)-enoyl-CoA. The catalysed reaction is a (3E)-enoyl-CoA = a 4-saturated (2E)-enoyl-CoA. It catalyses the reaction (3S)-3-hydroxybutanoyl-CoA = (3R)-3-hydroxybutanoyl-CoA. The enzyme catalyses a (3S)-3-hydroxyacyl-CoA + NAD(+) = a 3-oxoacyl-CoA + NADH + H(+). It carries out the reaction (3S)-3-hydroxybutanoyl-CoA + NAD(+) = acetoacetyl-CoA + NADH + H(+). The catalysed reaction is (3S)-hydroxyhexanoyl-CoA + NAD(+) = 3-oxohexanoyl-CoA + NADH + H(+). It catalyses the reaction (3S)-hydroxyoctanoyl-CoA + NAD(+) = 3-oxooctanoyl-CoA + NADH + H(+). The enzyme catalyses (3S)-3-hydroxydodecanoyl-CoA + NAD(+) = 3-oxododecanoyl-CoA + NADH + H(+). It carries out the reaction (3S)-hydroxytetradecanoyl-CoA + NAD(+) = 3-oxotetradecanoyl-CoA + NADH + H(+). The protein operates within lipid metabolism; fatty acid beta-oxidation. Its function is as follows. Involved in peroxisomal fatty acid beta-oxidation during seed germination. Possesses enoyl-CoA hydratase activity against long chain substrates (C14-C18) and 3-hydroxyacyl-CoA dehydrogenase activity against chains of variable sizes (C6-C18). Possesses 3-hydroxy-3-phenylpropionyl-CoA dehydrogenase activity and is involved in the peroxisomal beta-oxidation pathway for the biosynthesis of benzoic acid (BA). Required for the accumulation in seeds of substituted hydroxybenzoylated choline esters, which are BA-containing secondary metabolites. Fatty acid beta-oxidation pathway in peroxisomes regulates gene silencing, histone acetylation and DNA methylation. This chain is Peroxisomal fatty acid beta-oxidation multifunctional protein MFP2, found in Arabidopsis thaliana (Mouse-ear cress).